The primary structure comprises 60 residues: Metallothionein (60 aa).

The beta stretch occupies residues 1 to 28; the sequence is MDPCDCAKTGTCNCGTSCTCANCSCTKC. A divalent metal cation contacts are provided by Cys-4, Cys-6, Cys-12, Cys-14, Cys-18, Cys-20, Cys-23, Cys-25, Cys-28, Cys-32, Cys-33, Cys-35, Cys-36, Cys-40, Cys-43, Cys-47, Cys-49, Cys-54, Cys-58, and Cys-59. Residues 29–60 form an alpha region; sequence KKSCCECCPSGCSKCASGCACKDKTCDTNCCQ.

Belongs to the metallothionein superfamily. Type 1 family.

Metallothioneins have a high content of cysteine residues that bind various heavy metals. This is Metallothionein (mt) from Gadus morhua (Atlantic cod).